A 220-amino-acid chain; its full sequence is Small ribosomal subunit protein uS3 (220 aa).

The region spanning 38 to 106 (IRKYVKGRLK…RVHININEIK (69 aa)) is the KH type-2 domain.

The protein belongs to the universal ribosomal protein uS3 family. As to quaternary structure, part of the 30S ribosomal subunit. Forms a tight complex with proteins S10 and S14.

Functionally, binds the lower part of the 30S subunit head. Binds mRNA in the 70S ribosome, positioning it for translation. This is Small ribosomal subunit protein uS3 from Brevibacillus brevis (strain 47 / JCM 6285 / NBRC 100599).